A 148-amino-acid chain; its full sequence is uncharacterized protein (148 aa).

The first 16 residues, methionine 1–glycine 16, serve as a signal peptide directing secretion. An N-linked (GlcNAc...) asparagine glycan is attached at asparagine 50. Residues methionine 91–methionine 125 form a disordered region. Residues proline 96–proline 116 show a composition bias toward low complexity.

The protein resides in the secreted. This is an uncharacterized protein from Mus musculus (Mouse).